A 580-amino-acid polypeptide reads, in one-letter code: Rho guanine nucleotide exchange factor 25 (580 aa).

Residues 48–67 (AASGLAAPSGPSSGLSSGPC) show a composition bias toward low complexity. Disordered regions lie at residues 48-76 (AASGLAAPSGPSSGLSSGPCSPGPPGPVS) and 128-157 (LEGPGDKTQPPEEETLSQAPESEEEQKKKA). One can recognise a DH domain in the interval 160-336 (RSMYVLSELV…CFVPKRCNDM (177 aa)). The important for binding to Rho GTPases stretch occupies residues 278–299 (LGHRLQLNDLLIKPVQRIMKYQ). Residues 348–466 (KLTAQGKLLG…WIKHVAQILE (119 aa)) form the PH domain. The sufficient to bind activated GNAQ stretch occupies residues 467-493 (SQRDFLNALQSPIEYQRRESQTNSLGR). Disordered regions lie at residues 482-524 (QRRE…GSLP) and 545-580 (ALGDIPQAPHDSPPVSPTPKTPPCQARLAKLDEDEL). The segment covering 509 to 520 (DQAQGSTHTPIN) has biased composition (polar residues). The span at 555–566 (DSPPVSPTPKTP) shows a compositional bias: pro residues.

As to quaternary structure, interacts (via the DH domain) with POPDC1 (via the C-terminus cytoplasmic tail). Interacts with activated GNAQ and GNA11. Interacts with RHOA, CDC42 and RAC1. Isoform 1 and isoform 2 are highly expressed in excitable tissues, such as brain, heart and muscle. Also detected in kidney and liver.

It localises to the cell membrane. The protein resides in the cytoplasm. Its subcellular location is the myofibril. It is found in the sarcomere. Its function is as follows. May play a role in actin cytoskeleton reorganization in different tissues since its activation induces formation of actin stress fibers. It works as a guanine nucleotide exchange factor for Rho family of small GTPases. Links specifically G alpha q/11-coupled receptors to RHOA activation. May be an important regulator of processes involved in axon and dendrite formation. In neurons seems to be an exchange factor primarily for RAC1. Involved in skeletal myogenesis. The protein is Rho guanine nucleotide exchange factor 25 (ARHGEF25) of Homo sapiens (Human).